Reading from the N-terminus, the 454-residue chain is Bifunctional protein GlmU (454 aa).

The segment at 1 to 226 (MSLNVVILAA…AIEVEGANNR (226 aa)) is pyrophosphorylase. UDP-N-acetyl-alpha-D-glucosamine-binding positions include 8 to 11 (LAAG), Lys22, Gln73, 78 to 79 (GT), 100 to 102 (YGD), Gly137, Glu151, Asn166, and Asn224. Asp102 contributes to the Mg(2+) binding site. Asn224 lines the Mg(2+) pocket. The segment at 227-247 (VQLAQLERAYQARAAEKMMLE) is linker. An N-acetyltransferase region spans residues 248–454 (GANLRDPARI…GWQRPIKIKK (207 aa)). Residues Arg330 and Lys348 each contribute to the UDP-N-acetyl-alpha-D-glucosamine site. Residue His360 is the Proton acceptor of the active site. Positions 363 and 374 each coordinate UDP-N-acetyl-alpha-D-glucosamine. Residues Ala377, 383-384 (NY), Ser402, Ala420, and Arg437 each bind acetyl-CoA.

The protein in the N-terminal section; belongs to the N-acetylglucosamine-1-phosphate uridyltransferase family. This sequence in the C-terminal section; belongs to the transferase hexapeptide repeat family. Homotrimer. Mg(2+) is required as a cofactor.

The protein resides in the cytoplasm. It carries out the reaction alpha-D-glucosamine 1-phosphate + acetyl-CoA = N-acetyl-alpha-D-glucosamine 1-phosphate + CoA + H(+). It catalyses the reaction N-acetyl-alpha-D-glucosamine 1-phosphate + UTP + H(+) = UDP-N-acetyl-alpha-D-glucosamine + diphosphate. It participates in nucleotide-sugar biosynthesis; UDP-N-acetyl-alpha-D-glucosamine biosynthesis; N-acetyl-alpha-D-glucosamine 1-phosphate from alpha-D-glucosamine 6-phosphate (route II): step 2/2. Its pathway is nucleotide-sugar biosynthesis; UDP-N-acetyl-alpha-D-glucosamine biosynthesis; UDP-N-acetyl-alpha-D-glucosamine from N-acetyl-alpha-D-glucosamine 1-phosphate: step 1/1. It functions in the pathway bacterial outer membrane biogenesis; LPS lipid A biosynthesis. Its function is as follows. Catalyzes the last two sequential reactions in the de novo biosynthetic pathway for UDP-N-acetylglucosamine (UDP-GlcNAc). The C-terminal domain catalyzes the transfer of acetyl group from acetyl coenzyme A to glucosamine-1-phosphate (GlcN-1-P) to produce N-acetylglucosamine-1-phosphate (GlcNAc-1-P), which is converted into UDP-GlcNAc by the transfer of uridine 5-monophosphate (from uridine 5-triphosphate), a reaction catalyzed by the N-terminal domain. This chain is Bifunctional protein GlmU, found in Shewanella frigidimarina (strain NCIMB 400).